The following is a 1266-amino-acid chain: 5-oxoprolinase 1 (1266 aa).

This sequence belongs to the oxoprolinase family. Expressed in roots, stems, leaves, flowers and siliques.

It is found in the cytoplasm. The enzyme catalyses 5-oxo-L-proline + ATP + 2 H2O = L-glutamate + ADP + phosphate + H(+). Functionally, catalyzes the cleavage of 5-oxo-L-proline to form L-glutamate coupled to the hydrolysis of ATP to ADP and inorganic phosphate. Acts in the glutathione degradation pathway. The polypeptide is 5-oxoprolinase 1 (Arabidopsis thaliana (Mouse-ear cress)).